Here is a 488-residue protein sequence, read N- to C-terminus: ATP synthase subunit beta (488 aa).

164 to 171 (GGAGVGKT) contacts ATP.

This sequence belongs to the ATPase alpha/beta chains family. In terms of assembly, F-type ATPases have 2 components, CF(1) - the catalytic core - and CF(0) - the membrane proton channel. CF(1) has five subunits: alpha(3), beta(3), gamma(1), delta(1), epsilon(1). CF(0) has four main subunits: a(1), b(1), b'(1) and c(9-12).

It is found in the cellular thylakoid membrane. The enzyme catalyses ATP + H2O + 4 H(+)(in) = ADP + phosphate + 5 H(+)(out). In terms of biological role, produces ATP from ADP in the presence of a proton gradient across the membrane. The catalytic sites are hosted primarily by the beta subunits. The protein is ATP synthase subunit beta of Prochlorococcus marinus (strain NATL2A).